Here is a 352-residue protein sequence, read N- to C-terminus: MDDNKKKALAAALGQIERQFGKGAVMRMGDHDRQAIPAISTGSLGLDIALGIGGLPKGRIVEIYGPESSGKTTLTLSVIAQAQKMGATCAFVDAEHALDPEYAGKLGVNVDDLLVSQPDTGEQALEITDMLVRSNAIDVIVVDSVAALVPKAEIEGEMGDMHVGLQARLMSQALRKITGNIKNANCLVIFINQIRMKIGVMFGSPETTTGGNALKFYASVRLDIRRTGAVKEGDEVVGSETRVKVVKNKVAPPFRQAEFQILYGKGIYLNGEMIDLGVLHGFVEKSGAWYAYNGSKIGQGKANSAKFLADNPDIVATLEKQIRDKLLTPAPDVKAAANREPVEEVEEADTDI.

65 to 72 contributes to the ATP binding site; it reads GPESSGKT. Residues 333 to 352 are disordered; it reads VKAAANREPVEEVEEADTDI. A compositionally biased stretch (acidic residues) spans 343–352; it reads EEVEEADTDI.

This sequence belongs to the RecA family.

It is found in the cytoplasm. Can catalyze the hydrolysis of ATP in the presence of single-stranded DNA, the ATP-dependent uptake of single-stranded DNA by duplex DNA, and the ATP-dependent hybridization of homologous single-stranded DNAs. It interacts with LexA causing its activation and leading to its autocatalytic cleavage. The sequence is that of Protein RecA from Pseudomonas fluorescens.